Here is a 97-residue protein sequence, read N- to C-terminus: Aspartyl/glutamyl-tRNA(Asn/Gln) amidotransferase subunit C (97 aa).

Positions 74 to 97 (AEQALDQAPASQRDRFEVPRILGE) are disordered. Residues 85 to 97 (QRDRFEVPRILGE) show a composition bias toward basic and acidic residues.

It belongs to the GatC family. As to quaternary structure, heterotrimer of A, B and C subunits.

The catalysed reaction is L-glutamyl-tRNA(Gln) + L-glutamine + ATP + H2O = L-glutaminyl-tRNA(Gln) + L-glutamate + ADP + phosphate + H(+). It carries out the reaction L-aspartyl-tRNA(Asn) + L-glutamine + ATP + H2O = L-asparaginyl-tRNA(Asn) + L-glutamate + ADP + phosphate + 2 H(+). Its function is as follows. Allows the formation of correctly charged Asn-tRNA(Asn) or Gln-tRNA(Gln) through the transamidation of misacylated Asp-tRNA(Asn) or Glu-tRNA(Gln) in organisms which lack either or both of asparaginyl-tRNA or glutaminyl-tRNA synthetases. The reaction takes place in the presence of glutamine and ATP through an activated phospho-Asp-tRNA(Asn) or phospho-Glu-tRNA(Gln). The protein is Aspartyl/glutamyl-tRNA(Asn/Gln) amidotransferase subunit C of Corynebacterium kroppenstedtii (strain DSM 44385 / JCM 11950 / CIP 105744 / CCUG 35717).